The chain runs to 474 residues: B-cell CLL/lymphoma 6 member B protein (474 aa).

The region spanning 38–105 is the BTB domain; sequence TDVTLLVGGQ…MYTSRLRLSP (68 aa). Disordered stretches follow at residues 144–190 and 210–249; these read PVEV…PDPK and GSLV…GLQS. Pro residues predominate over residues 150–160; that stretch reads PRPPTVAPPGS. Basic and acidic residues predominate over residues 162–172; sequence RRSEGHPDPPT. Polar residues-rich tracts occupy residues 173–183, 210–220, and 240–249; these read ESRSCSQGSPS, GSLVGESSGQP, and EEGTTPGLQS. 5 C2H2-type zinc fingers span residues 323–345, 351–373, 379–401, 407–429, and 435–458; these read YKCQ…RTVH, YRCS…SRIH, YKCE…VLIH, YPCP…VRIH, and YHCD…RQKH.

Associates with BCL6 through the BTB domain. As to expression, ubiquitously expressed with higher expression found in heart and lung.

It is found in the nucleus. Functionally, acts as a sequence-specific transcriptional repressor in association with BCL6. Necessary for activation of naive T-cells to antigenic stimulation. May attenuate the regulatory effect of BCL6 on antigenic activation of naive CD4 T-cells by forming a heterodimer with BCL6. This chain is B-cell CLL/lymphoma 6 member B protein (Bcl6b), found in Mus musculus (Mouse).